A 180-amino-acid polypeptide reads, in one-letter code: Ribulose bisphosphate carboxylase small subunit, chloroplastic 2 (180 aa).

The transit peptide at 1-56 (MASSVMSSAAVATSTNAAQASMVAPFTGLKSAASFPVSRKQNLDITSIASNGGRVQ) directs the protein to the chloroplast.

This sequence belongs to the RuBisCO small chain family. In terms of assembly, heterohexadecamer of 8 large and 8 small subunits.

Its subcellular location is the plastid. It is found in the chloroplast. RuBisCO catalyzes two reactions: the carboxylation of D-ribulose 1,5-bisphosphate, the primary event in carbon dioxide fixation, as well as the oxidative fragmentation of the pentose substrate. Both reactions occur simultaneously and in competition at the same active site. Although the small subunit is not catalytic it is essential for maximal activity. This is Ribulose bisphosphate carboxylase small subunit, chloroplastic 2 from Petunia hybrida (Petunia).